The chain runs to 122 residues: Large ribosomal subunit protein uL14 (122 aa).

The protein belongs to the universal ribosomal protein uL14 family. In terms of assembly, part of the 50S ribosomal subunit. Forms a cluster with proteins L3 and L19. In the 70S ribosome, L14 and L19 interact and together make contacts with the 16S rRNA in bridges B5 and B8.

Binds to 23S rRNA. Forms part of two intersubunit bridges in the 70S ribosome. The sequence is that of Large ribosomal subunit protein uL14 from Shewanella loihica (strain ATCC BAA-1088 / PV-4).